Reading from the N-terminus, the 499-residue chain is Diacylglycerol kinase 1 (499 aa).

The DAGKc domain maps to 41 to 194 (APCCPVVVFI…IDSWHIIMRM (154 aa)). Positions 442-479 (PCKSKSVNDPSSPMCCSNHDDDERNSLEDEDEWEEGRK) are disordered. The segment covering 446–456 (KSVNDPSSPMC) has biased composition (polar residues). A compositionally biased stretch (basic and acidic residues) spans 459-468 (NHDDDERNSL).

It belongs to the eukaryotic diacylglycerol kinase family. Monomer. Highly expressed in roots.

It carries out the reaction a 1,2-diacyl-sn-glycerol + ATP = a 1,2-diacyl-sn-glycero-3-phosphate + ADP + H(+). Functionally, phosphorylates the second messenger diacylglycerol (DAG) to generate phosphatidic acid (PA), another important signaling molecule. PA is required for plant development and responses to abiotic stress. May play a role in disease resistance responses to pathogen attack. Modulates root architecture by regulating the ratio of DAG and PA, which have opposite effect on the promotion or suppression of lateral roots vs seminal roots. Suppresses lateral root number, but promotes seminal root and crown root thickness. The sequence is that of Diacylglycerol kinase 1 from Oryza sativa subsp. japonica (Rice).